The primary structure comprises 510 residues: ETS translocation variant 5 (510 aa).

A disordered region spans residues 132–245; it reads KPLTPPATPL…PGDSRPSYHR (114 aa). A compositionally biased stretch (low complexity) spans 163–174; the sequence is TPGAGPVQGVGP. Polar residues predominate over residues 211-224; the sequence is QYPSEQRFQRQLSE. A Phosphoserine modification is found at serine 248. Lysine 350 participates in a covalent cross-link: Glycyl lysine isopeptide (Lys-Gly) (interchain with G-Cter in SUMO2). Positions 368 to 448 form a DNA-binding region, ETS; sequence LQLWQFLVTL…AGERYVYKFV (81 aa).

It belongs to the ETS family. In terms of assembly, interacts (via C-terminal) with ZMYM5 (via N-terminal 120 amino acid region). As to expression, in the brain, expressed predominantly in the cerebral cortex, the amygdala and the hypothalamus. Within the cerebral cortex, there is conspicuously high expression in cortical layers 2, 4 and 6 while expression is almost absent from layers 1, 3 and 5. High expression is also observed in the dorsal and ventral endopiriform claustrum. Strong expression is observed in limited parts of the amygdala including the basolateral amygdaloid nucleus, the bed stria terminalis and the central amygdaloid nucleus. Low to moderate levels are found in the hypothalamus while expression is almost absent in the thalamus. Hypothalamic expression is seen in the dorsomedial hypothalamic nucleus and also the central, dorsomedial and ventrolateral parts of the ventromedial hypothalamic nucleus. Strong expression is also identified in the nigrostriatal tract. In the mesencephalon, expression is restricted to the ventral tegmental area including the parabrachial pigmented nucleus. In the hippocampus, strongly expressed in the pyramidal cell layer. Some expression is also found in the lacunosum moleculare layer. Low levels of expression in the cerebellum, including the granular, molecular and Purkinje cell layers.

Its subcellular location is the nucleus. Functionally, binds to DNA sequences containing the consensus nucleotide core sequence 5'-GGAA.-3'. This Mus musculus (Mouse) protein is ETS translocation variant 5 (Etv5).